The following is a 426-amino-acid chain: Gamma-glutamyl phosphate reductase (426 aa).

This sequence belongs to the gamma-glutamyl phosphate reductase family.

It is found in the cytoplasm. The catalysed reaction is L-glutamate 5-semialdehyde + phosphate + NADP(+) = L-glutamyl 5-phosphate + NADPH + H(+). The protein operates within amino-acid biosynthesis; L-proline biosynthesis; L-glutamate 5-semialdehyde from L-glutamate: step 2/2. In terms of biological role, catalyzes the NADPH-dependent reduction of L-glutamate 5-phosphate into L-glutamate 5-semialdehyde and phosphate. The product spontaneously undergoes cyclization to form 1-pyrroline-5-carboxylate. The sequence is that of Gamma-glutamyl phosphate reductase from Sorangium cellulosum (strain So ce56) (Polyangium cellulosum (strain So ce56)).